Consider the following 83-residue polypeptide: Small ribosomal subunit protein bS16 (83 aa).

This sequence belongs to the bacterial ribosomal protein bS16 family.

The polypeptide is Small ribosomal subunit protein bS16 (Chromobacterium violaceum (strain ATCC 12472 / DSM 30191 / JCM 1249 / CCUG 213 / NBRC 12614 / NCIMB 9131 / NCTC 9757 / MK)).